We begin with the raw amino-acid sequence, 146 residues long: Hemoglobin subunit theta (146 aa).

The Globin domain occupies 2-146 (HFTAEEKSVI…VATALAHKYH (145 aa)). Heme b contacts are provided by histidine 63 and histidine 92.

This sequence belongs to the globin family.

This Sus scrofa (Pig) protein is Hemoglobin subunit theta.